A 138-amino-acid polypeptide reads, in one-letter code: Large ribosomal subunit protein bL19 (138 aa).

The protein belongs to the bacterial ribosomal protein bL19 family.

Its function is as follows. This protein is located at the 30S-50S ribosomal subunit interface and may play a role in the structure and function of the aminoacyl-tRNA binding site. The polypeptide is Large ribosomal subunit protein bL19 (Rickettsia akari (strain Hartford)).